We begin with the raw amino-acid sequence, 404 residues long: GID complex subunit 9 (404 aa).

In terms of domain architecture, LisH spans 116–148 (SRVRLNRLVADYMMANGYHGAAALLCKDSQLEN). Positions 154–211 (IYKRYQLIHDSILQQELKEVLSWCSEHRAILKKNNSTLELEVRLQRFIELIKSKKLCQ) constitute a CTLH domain. The segment at 317-389 (CPVCTPCLND…REGFLRDPYS (73 aa)) adopts an RING-Gid-type zinc-finger fold.

This sequence belongs to the FYV10 family. In terms of assembly, identified in the GID/CTLH complex. In the absence of stress, the complex exists as an inactive anticipatory complex (GID(Ant)), composed of Gid1, the E3 ubiquitin-ligase Gid2, Gid5, Gid8, and the RING-like subunit Gid9, awaiting a substrate receptor to form the active E3 ligase complex. When cells are shifted to glucose-containing medium, the substrate receptor Gid4 is induced and becomes part of the complex, named GID(SR4). Additionally, Gid7 transforms the GID(SR4) E3 ligase core into a higher-order supramolecular assembly (Chelator-GID(SR4)). Under osmotic or heat stress, the substrate receptor Gid10 is induced and becomes part of the complex, named GID(SR10).

The protein localises to the cytoplasm. The protein resides in the nucleus. It carries out the reaction S-ubiquitinyl-[E2 ubiquitin-conjugating enzyme]-L-cysteine + [acceptor protein]-L-lysine = [E2 ubiquitin-conjugating enzyme]-L-cysteine + N(6)-ubiquitinyl-[acceptor protein]-L-lysine.. The protein operates within protein modification; protein ubiquitination. Component of the GID E3 ligase complex recruiting N termini and catalyzing ubiquitination of proteins targeted for degradation. GID E3 is regulated through assembly with interchangeable N-degron-binding substrate receptors induced by distinct environmental perturbations. Required for the adaptation to the presence of glucose in the growth medium; mediates in association with the substrate receptor VID24/GID4 the degradation of enzymes involved in gluconeogenesis when cells are shifted to glucose-containing medium. The chain is GID complex subunit 9 (gid9) from Schizosaccharomyces pombe (strain 972 / ATCC 24843) (Fission yeast).